The following is a 501-amino-acid chain: MTAAFYDLMDFDEVLEKYDPVMGLEVHVELGTETKMFSASSAHFGAEPNSNVDPVSLGLPGALPVVNAKGVEWAIKIGLALNCSIAESSRFARKNYFYPDQPKNYQISQYDEPIAYDGYLDVVLEDGTEWRVEIERAHMEEDTGKLTHLGGTSGRIHGATASLVDCNRAGIPLIEVVTKPIEGAGARAPEIAKAYVSALRDLVKALGVSDGRLDQGSMRVDANLSLRPIGQEEFGTRTETKNINSLKSVEQAITFEMQRQAQVLDDGGVIDQETRHYQEADGSTSKGRPKETAEDYRYFNDPDLPPVIAPREWVEEIRATLPELPWVRRARIQEEWKLSDAEMRDLINANALDLIIETVEAGTTPDEARAWWVSYISQKANESGVELDALGVAPAHVARVVALVSEGKLTNKLARQAIDGVIAGEGDVDAVVAARGLEVVRDDGAIEKAVDEALAANPDIVEKYRAGNTKVTGAIVGAVMKATRGKADPAQVNQLIAKKLA.

Residues His276–Phe299 are disordered. Residues Arg288 to Phe299 show a composition bias toward basic and acidic residues.

It belongs to the GatB/GatE family. GatB subfamily. In terms of assembly, heterotrimer of A, B and C subunits.

It catalyses the reaction L-glutamyl-tRNA(Gln) + L-glutamine + ATP + H2O = L-glutaminyl-tRNA(Gln) + L-glutamate + ADP + phosphate + H(+). The enzyme catalyses L-aspartyl-tRNA(Asn) + L-glutamine + ATP + H2O = L-asparaginyl-tRNA(Asn) + L-glutamate + ADP + phosphate + 2 H(+). In terms of biological role, allows the formation of correctly charged Asn-tRNA(Asn) or Gln-tRNA(Gln) through the transamidation of misacylated Asp-tRNA(Asn) or Glu-tRNA(Gln) in organisms which lack either or both of asparaginyl-tRNA or glutaminyl-tRNA synthetases. The reaction takes place in the presence of glutamine and ATP through an activated phospho-Asp-tRNA(Asn) or phospho-Glu-tRNA(Gln). The protein is Aspartyl/glutamyl-tRNA(Asn/Gln) amidotransferase subunit B of Corynebacterium glutamicum (strain R).